The primary structure comprises 729 residues: Fatty acid oxidation complex subunit alpha (729 aa).

Positions 1-189 (MLYKGDTLYL…KIGLVDGVVK (189 aa)) are enoyl-CoA hydratase/isomerase. Asp296 serves as a coordination point for substrate. The segment at 311-729 (ETPKQAAVLG…ARPVGSLKTA (419 aa)) is 3-hydroxyacyl-CoA dehydrogenase. NAD(+) contacts are provided by residues Met324, Asp343, 400–402 (VVE), Lys407, and Ser429. The active-site For 3-hydroxyacyl-CoA dehydrogenase activity is the His450. Asn453 is a binding site for NAD(+). 2 residues coordinate substrate: Asn500 and Tyr660. The tract at residues 708–729 (RHNEPYYPPVEPARPVGSLKTA) is disordered.

In the N-terminal section; belongs to the enoyl-CoA hydratase/isomerase family. This sequence in the C-terminal section; belongs to the 3-hydroxyacyl-CoA dehydrogenase family. As to quaternary structure, heterotetramer of two alpha chains (FadB) and two beta chains (FadA).

It carries out the reaction a (3S)-3-hydroxyacyl-CoA + NAD(+) = a 3-oxoacyl-CoA + NADH + H(+). The catalysed reaction is a (3S)-3-hydroxyacyl-CoA = a (2E)-enoyl-CoA + H2O. The enzyme catalyses a 4-saturated-(3S)-3-hydroxyacyl-CoA = a (3E)-enoyl-CoA + H2O. It catalyses the reaction (3S)-3-hydroxybutanoyl-CoA = (3R)-3-hydroxybutanoyl-CoA. It carries out the reaction a (3Z)-enoyl-CoA = a 4-saturated (2E)-enoyl-CoA. The catalysed reaction is a (3E)-enoyl-CoA = a 4-saturated (2E)-enoyl-CoA. It functions in the pathway lipid metabolism; fatty acid beta-oxidation. Its function is as follows. Involved in the aerobic and anaerobic degradation of long-chain fatty acids via beta-oxidation cycle. Catalyzes the formation of 3-oxoacyl-CoA from enoyl-CoA via L-3-hydroxyacyl-CoA. It can also use D-3-hydroxyacyl-CoA and cis-3-enoyl-CoA as substrate. This Salmonella typhimurium (strain LT2 / SGSC1412 / ATCC 700720) protein is Fatty acid oxidation complex subunit alpha.